We begin with the raw amino-acid sequence, 428 residues long: Gamma-glutamyl phosphate reductase (428 aa).

Belongs to the gamma-glutamyl phosphate reductase family.

The protein localises to the cytoplasm. The enzyme catalyses L-glutamate 5-semialdehyde + phosphate + NADP(+) = L-glutamyl 5-phosphate + NADPH + H(+). It participates in amino-acid biosynthesis; L-proline biosynthesis; L-glutamate 5-semialdehyde from L-glutamate: step 2/2. Catalyzes the NADPH-dependent reduction of L-glutamate 5-phosphate into L-glutamate 5-semialdehyde and phosphate. The product spontaneously undergoes cyclization to form 1-pyrroline-5-carboxylate. This chain is Gamma-glutamyl phosphate reductase, found in Chromohalobacter salexigens (strain ATCC BAA-138 / DSM 3043 / CIP 106854 / NCIMB 13768 / 1H11).